Reading from the N-terminus, the 258-residue chain is Imidazole glycerol phosphate synthase subunit HisF (258 aa).

Residues aspartate 11 and aspartate 130 contribute to the active site.

Belongs to the HisA/HisF family. As to quaternary structure, heterodimer of HisH and HisF.

It localises to the cytoplasm. The enzyme catalyses 5-[(5-phospho-1-deoxy-D-ribulos-1-ylimino)methylamino]-1-(5-phospho-beta-D-ribosyl)imidazole-4-carboxamide + L-glutamine = D-erythro-1-(imidazol-4-yl)glycerol 3-phosphate + 5-amino-1-(5-phospho-beta-D-ribosyl)imidazole-4-carboxamide + L-glutamate + H(+). Its pathway is amino-acid biosynthesis; L-histidine biosynthesis; L-histidine from 5-phospho-alpha-D-ribose 1-diphosphate: step 5/9. In terms of biological role, IGPS catalyzes the conversion of PRFAR and glutamine to IGP, AICAR and glutamate. The HisF subunit catalyzes the cyclization activity that produces IGP and AICAR from PRFAR using the ammonia provided by the HisH subunit. The sequence is that of Imidazole glycerol phosphate synthase subunit HisF from Cronobacter sakazakii (strain ATCC BAA-894) (Enterobacter sakazakii).